The chain runs to 153 residues: Large ribosomal subunit protein uL13 (153 aa).

The protein belongs to the universal ribosomal protein uL13 family. As to quaternary structure, part of the 50S ribosomal subunit.

In terms of biological role, this protein is one of the early assembly proteins of the 50S ribosomal subunit, although it is not seen to bind rRNA by itself. It is important during the early stages of 50S assembly. The chain is Large ribosomal subunit protein uL13 from Azorhizobium caulinodans (strain ATCC 43989 / DSM 5975 / JCM 20966 / LMG 6465 / NBRC 14845 / NCIMB 13405 / ORS 571).